Reading from the N-terminus, the 123-residue chain is Small ribosomal subunit protein uS12c (123 aa).

The protein belongs to the universal ribosomal protein uS12 family. As to quaternary structure, part of the 30S ribosomal subunit.

It localises to the plastid. It is found in the chloroplast. Its function is as follows. With S4 and S5 plays an important role in translational accuracy. Located at the interface of the 30S and 50S subunits. The sequence is that of Small ribosomal subunit protein uS12c (rps12) from Chara vulgaris (Common stonewort).